A 309-amino-acid polypeptide reads, in one-letter code: Aspartate carbamoyltransferase catalytic subunit (309 aa).

The carbamoyl phosphate site is built by arginine 55 and threonine 56. Residue lysine 85 participates in L-aspartate binding. Carbamoyl phosphate-binding residues include arginine 106, histidine 135, and glutamine 138. Arginine 168 and arginine 230 together coordinate L-aspartate. Residues leucine 268 and proline 269 each coordinate carbamoyl phosphate.

It belongs to the aspartate/ornithine carbamoyltransferase superfamily. ATCase family. In terms of assembly, heterododecamer (2C3:3R2) of six catalytic PyrB chains organized as two trimers (C3), and six regulatory PyrI chains organized as three dimers (R2).

The enzyme catalyses carbamoyl phosphate + L-aspartate = N-carbamoyl-L-aspartate + phosphate + H(+). Its pathway is pyrimidine metabolism; UMP biosynthesis via de novo pathway; (S)-dihydroorotate from bicarbonate: step 2/3. In terms of biological role, catalyzes the condensation of carbamoyl phosphate and aspartate to form carbamoyl aspartate and inorganic phosphate, the committed step in the de novo pyrimidine nucleotide biosynthesis pathway. This chain is Aspartate carbamoyltransferase catalytic subunit, found in Vibrio cholerae serotype O1 (strain ATCC 39315 / El Tor Inaba N16961).